Reading from the N-terminus, the 250-residue chain is Ribosomal RNA small subunit methyltransferase J (250 aa).

S-adenosyl-L-methionine is bound by residues 96–97 (RD) and Asp-168.

It belongs to the methyltransferase superfamily. RsmJ family.

The protein localises to the cytoplasm. It catalyses the reaction guanosine(1516) in 16S rRNA + S-adenosyl-L-methionine = N(2)-methylguanosine(1516) in 16S rRNA + S-adenosyl-L-homocysteine + H(+). Specifically methylates the guanosine in position 1516 of 16S rRNA. The chain is Ribosomal RNA small subunit methyltransferase J from Neisseria gonorrhoeae (strain ATCC 700825 / FA 1090).